The sequence spans 456 residues: Bifunctional protein GlmU (456 aa).

Positions 1 to 229 (MSSHAMSVVI…LSEVEGVNNR (229 aa)) are pyrophosphorylase. Residues 11-14 (LAAG), lysine 25, glutamine 76, 81-82 (GT), 103-105 (YGD), glycine 140, glutamate 154, asparagine 169, and asparagine 227 each bind UDP-N-acetyl-alpha-D-glucosamine. A Mg(2+)-binding site is contributed by aspartate 105. Position 227 (asparagine 227) interacts with Mg(2+). Residues 230-250 (LQLARLEHVYQAEQAEKLLLA) are linker. The interval 251–456 (GVMLRDPARF…QGWRRPVKKK (206 aa)) is N-acetyltransferase. Residues arginine 333 and lysine 351 each coordinate UDP-N-acetyl-alpha-D-glucosamine. Catalysis depends on histidine 363, which acts as the Proton acceptor. Tyrosine 366 and asparagine 377 together coordinate UDP-N-acetyl-alpha-D-glucosamine. Residues alanine 380, 386–387 (NY), serine 405, alanine 423, and arginine 440 each bind acetyl-CoA.

It in the N-terminal section; belongs to the N-acetylglucosamine-1-phosphate uridyltransferase family. In the C-terminal section; belongs to the transferase hexapeptide repeat family. Homotrimer. The cofactor is Mg(2+).

It localises to the cytoplasm. It carries out the reaction alpha-D-glucosamine 1-phosphate + acetyl-CoA = N-acetyl-alpha-D-glucosamine 1-phosphate + CoA + H(+). The catalysed reaction is N-acetyl-alpha-D-glucosamine 1-phosphate + UTP + H(+) = UDP-N-acetyl-alpha-D-glucosamine + diphosphate. Its pathway is nucleotide-sugar biosynthesis; UDP-N-acetyl-alpha-D-glucosamine biosynthesis; N-acetyl-alpha-D-glucosamine 1-phosphate from alpha-D-glucosamine 6-phosphate (route II): step 2/2. It participates in nucleotide-sugar biosynthesis; UDP-N-acetyl-alpha-D-glucosamine biosynthesis; UDP-N-acetyl-alpha-D-glucosamine from N-acetyl-alpha-D-glucosamine 1-phosphate: step 1/1. The protein operates within bacterial outer membrane biogenesis; LPS lipid A biosynthesis. Its function is as follows. Catalyzes the last two sequential reactions in the de novo biosynthetic pathway for UDP-N-acetylglucosamine (UDP-GlcNAc). The C-terminal domain catalyzes the transfer of acetyl group from acetyl coenzyme A to glucosamine-1-phosphate (GlcN-1-P) to produce N-acetylglucosamine-1-phosphate (GlcNAc-1-P), which is converted into UDP-GlcNAc by the transfer of uridine 5-monophosphate (from uridine 5-triphosphate), a reaction catalyzed by the N-terminal domain. The chain is Bifunctional protein GlmU from Cronobacter sakazakii (strain ATCC BAA-894) (Enterobacter sakazakii).